Consider the following 572-residue polypeptide: Arginine--tRNA ligase (572 aa).

Residues 122-132 carry the 'HIGH' region motif; sequence PNLAKEMHVGH.

Belongs to the class-I aminoacyl-tRNA synthetase family. Monomer.

It is found in the cytoplasm. The catalysed reaction is tRNA(Arg) + L-arginine + ATP = L-arginyl-tRNA(Arg) + AMP + diphosphate. This Neisseria meningitidis serogroup B (strain ATCC BAA-335 / MC58) protein is Arginine--tRNA ligase.